A 253-amino-acid chain; its full sequence is Complement C1q subcomponent subunit B (253 aa).

The N-terminal stretch at 1–25 (MKTQWSEILTPLLLLLLGLLHVSWA) is a signal peptide. Gln26 carries the post-translational modification Pyrrolidone carboxylic acid. In terms of domain architecture, Collagen-like spans 29–112 (CTGSPGIPGV…GPRGPKGGSG (84 aa)). The segment at 29-114 (CTGSPGIPGV…RGPKGGSGDY (86 aa)) is disordered. Residues Pro33, Pro36, Pro39, Pro51, and Pro54 each carry the 4-hydroxyproline modification. A 5-hydroxylysine mark is found at Lys57 and Lys60. 4-hydroxyproline is present on Pro63. Residues 68–77 (DHGELGEKGD) are compositionally biased toward basic and acidic residues. At Lys75 the chain carries 5-hydroxylysine. Residues 78-96 (AGIPGIPGKVGPKGPVGPK) are compositionally biased toward low complexity. Residues Pro81 and Pro84 each carry the 4-hydroxyproline modification. 5-hydroxylysine occurs at positions 90 and 96. A 4-hydroxyproline mark is found at Pro99 and Pro102. Lys108 is subject to 5-hydroxylysine. One can recognise a C1q domain in the interval 115 to 253 (KATQKVAFSA…GFLLFPDMDV (139 aa)). A disulfide bridge connects residues Cys179 and Cys198. Asp199, Tyr200, and Gln206 together coordinate Ca(2+).

As to quaternary structure, core component of the complement C1 complex, a calcium-dependent complex composed of 1 molecule of the C1Q subcomplex, 2 molecules of C1R and 2 molecules of C1S. The C1Q subcomplex is composed 18 subunits: 3 chains of C1QA, C1QB, and C1QC trimerize to form 6 collagen-like triple helices connected to six globular ligand-recognition modules (C1q domain). In terms of processing, hydroxylated on lysine and proline residues. Hydroxylated lysine residues can be glycosylated. Human C1Q contains up to 68.3 hydroxylysine-galactosylglucose residues and up to 2.5 hydroxylysine-galactose per molecule. Total percentage hydroxylysine residues glycosylated is 86.4%. As to expression, highest levels in spleen, lung and brain. Weaker expression in kidney and liver. In the spleen, localized mainly to the red pulp, in cells mainly of monocyte-macrophage lineage. In white pulp, localized in specific dendritic cells such as those from the periarteriolar lymphatic sheath (PALS).

Its subcellular location is the secreted. The protein localises to the cell surface. With respect to regulation, the C1Q subcomplex is inhibited by sulfated molecules, such as triterpenoid sulfates, heparan sulfate, or chondroitin sulfates. In terms of biological role, core component of the complement C1 complex, a multiprotein complex that initiates the classical pathway of the complement system, a cascade of proteins that leads to phagocytosis and breakdown of pathogens and signaling that strengthens the adaptive immune system. The classical complement pathway is initiated by the C1Q subcomplex of the C1 complex, which specifically binds IgG or IgM immunoglobulins complexed with antigens, forming antigen-antibody complexes on the surface of pathogens: C1QA, together with C1QB and C1QC, specifically recognizes and binds the Fc regions of IgG or IgM via its C1q domain. Immunoglobulin-binding activates the proenzyme C1R, which cleaves C1S, initiating the proteolytic cascade of the complement system. The C1Q subcomplex is activated by a hexamer of IgG complexed with antigens, while it is activated by a pentameric IgM. The C1Q subcomplex also recognizes and binds phosphatidylserine exposed on the surface of cells undergoing programmed cell death, possibly promoting activation of the complement system. In Rattus norvegicus (Rat), this protein is Complement C1q subcomponent subunit B.